Reading from the N-terminus, the 364-residue chain is DNA primase large subunit PriL (364 aa).

[4Fe-4S] cluster-binding residues include C237, C309, C318, and C325. The interval 345-364 is disordered; it reads MQNDNEKGHEEKKEGETPPQ.

This sequence belongs to the eukaryotic-type primase large subunit family. In terms of assembly, heterodimer of a small subunit (PriS) and a large subunit (PriL). The cofactor is [4Fe-4S] cluster.

In terms of biological role, regulatory subunit of DNA primase, an RNA polymerase that catalyzes the synthesis of short RNA molecules used as primers for DNA polymerase during DNA replication. Stabilizes and modulates the activity of the small subunit, increasing the rate of DNA synthesis, and conferring RNA synthesis capability. The DNA polymerase activity may enable DNA primase to also catalyze primer extension after primer synthesis. May also play a role in DNA repair. This is DNA primase large subunit PriL from Methanococcoides burtonii (strain DSM 6242 / NBRC 107633 / OCM 468 / ACE-M).